A 583-amino-acid polypeptide reads, in one-letter code: Protein NRT1/ PTR FAMILY 5.1 (583 aa).

Residues 74–94 (WSGAVWITPIAGAYIADSYIG) traverse the membrane as a helical segment. Threonine 98 bears the Phosphothreonine mark. 10 helical membrane-spanning segments follow: residues 99 to 119 (FTASSLIYVLGMILLTMAVTV), 134 to 154 (ASSLQVTFFYISLYTIAIGAG), 182 to 202 (FFNWWMFSSFLGALFATLGLV), 210 to 230 (WGLGYGIPTVGLLVSLVVFYI), 320 to 340 (VLGLIFIWLVTLIPSTLWAQV), 361 to 381 (IPAASLGSFVTLSMLLSVPMY), 405 to 425 (LGVGFAIQIVAIAIASAVEVK), 446 to 466 (IFWLLPQYSLLGIGDVFNAIG), 485 to 505 (TFFTSGIGLGNFLNSFLVTMI), and 529 to 549 (YYYGFLVVISIVNMGLFVWAA).

It belongs to the major facilitator superfamily. Proton-dependent oligopeptide transporter (POT/PTR) (TC 2.A.17) family. Expressed in flowers. Detected in stems, leaves and siliques.

The protein resides in the membrane. This chain is Protein NRT1/ PTR FAMILY 5.1 (NPF5.1), found in Arabidopsis thaliana (Mouse-ear cress).